The sequence spans 102 residues: Large ribosomal subunit protein uL23 (102 aa).

It belongs to the universal ribosomal protein uL23 family. In terms of assembly, part of the 50S ribosomal subunit. Contacts protein L29, and trigger factor when it is bound to the ribosome.

Its function is as follows. One of the early assembly proteins it binds 23S rRNA. One of the proteins that surrounds the polypeptide exit tunnel on the outside of the ribosome. Forms the main docking site for trigger factor binding to the ribosome. This chain is Large ribosomal subunit protein uL23, found in Chromobacterium violaceum (strain ATCC 12472 / DSM 30191 / JCM 1249 / CCUG 213 / NBRC 12614 / NCIMB 9131 / NCTC 9757 / MK).